The primary structure comprises 661 residues: COBRA-like protein 7 (661 aa).

An N-terminal signal peptide occupies residues 1 to 26 (MDSAPNFIPRLLLLSLLIVSIPLTSS). The interval 26-45 (SQSDANTTNPSPSPPSDSDL) is disordered. N-linked (GlcNAc...) asparagine glycosylation is found at N31, N64, N122, N170, N314, N327, N356, N369, N398, N410, N430, N472, N551, and N561. S637 carries GPI-anchor amidated serine lipidation. A propeptide spans 638–661 (SQHRKHISVFLLALPVLALLILRA) (removed in mature form).

Belongs to the COBRA family. In terms of tissue distribution, expressed in roots, stems, leaves, flowers and siliques.

It localises to the cell membrane. This chain is COBRA-like protein 7 (COBL7), found in Arabidopsis thaliana (Mouse-ear cress).